Here is a 228-residue protein sequence, read N- to C-terminus: Cytokinin riboside 5'-monophosphate phosphoribohydrolase LOG5 (228 aa).

Residues Glu79, 97–98 (RK), and 114–120 (GYGTLEE) contribute to the substrate site.

Belongs to the LOG family. As to expression, expressed in roots and shoots. Detected in vascular tissues of roots, cotyledons, and leaves, axillary buds, immature and mature flowers, fruit abscission zones and ovules.

It localises to the cytoplasm. The protein resides in the nucleus. The catalysed reaction is N(6)-(dimethylallyl)adenosine 5'-phosphate + H2O = N(6)-dimethylallyladenine + D-ribose 5-phosphate. It catalyses the reaction 9-ribosyl-trans-zeatin 5'-phosphate + H2O = trans-zeatin + D-ribose 5-phosphate. Cytokinin-activating enzyme working in the direct activation pathway. Phosphoribohydrolase that converts inactive cytokinin nucleotides to the biologically active free-base forms. This Arabidopsis thaliana (Mouse-ear cress) protein is Cytokinin riboside 5'-monophosphate phosphoribohydrolase LOG5 (LOG5).